A 640-amino-acid chain; its full sequence is Lysophospholipase (640 aa).

Positions 1 to 25 are cleaved as a signal peptide; sequence MWFLNSVNLLFLVCSVALHLDAVNA. In terms of domain architecture, PLA2c spans 38–589; it reads DCDENINLVR…EKYCWNGTVD (552 aa). N84, N126, N163, N173, N218, N280, N310, N317, N348, N391, N492, N516, N544, N568, and N585 each carry an N-linked (GlcNAc...) asparagine glycan. Over residues 594–610 the composition is skewed to low complexity; that stretch reads ISSTTSSSASSTSTSDS. The disordered stretch occupies residues 594 to 616; the sequence is ISSTTSSSASSTSTSDSGNKENS.

This sequence belongs to the lysophospholipase family. In terms of processing, highly glycosylated.

The protein resides in the secreted. The enzyme catalyses a 1-acyl-sn-glycero-3-phosphocholine + H2O = sn-glycerol 3-phosphocholine + a fatty acid + H(+). Functionally, catalyzes the release of fatty acids from lysophospholipids. At acidic pH the enzyme hydrolyzes all phospholipid substrates without metal ion. On the other hand, at alkaline pH the enzyme shows substrate specificity for phosphatidylcholine and lysophosphatidylcholine and requires Ca(2+), Fe(3+), or Al(3+) for the activity. This is Lysophospholipase (PLB) from Kluyveromyces lactis (strain ATCC 8585 / CBS 2359 / DSM 70799 / NBRC 1267 / NRRL Y-1140 / WM37) (Yeast).